Here is a 1011-residue protein sequence, read N- to C-terminus: Translation initiation factor IF-2 (1011 aa).

The span at 49–77 (YIHEHGTEESPRRRSAGEDEFKPKIDLSK) shows a compositional bias: basic and acidic residues. 2 disordered regions span residues 49–152 (YIHE…RFIT) and 187–407 (AAPA…LSLS). Over residues 93-104 (APPPPPPPPPRP) the composition is skewed to pro residues. Over residues 105 to 115 (AVKAPSPVSQE) the composition is skewed to low complexity. The segment covering 116–126 (PRPPAVPPAPQ) has biased composition (pro residues). Composition is skewed to low complexity over residues 187–212 (AAPAEEPKAAAPATTAPEAPEVKAPV) and 228–242 (TAKPEAPAAPGAATP). 2 stretches are compositionally biased toward pro residues: residues 243 to 252 (APTPGRPLPG) and 276 to 290 (SAPPPAPPRPTPPPQ). Over residues 316–329 (GPGGGSGGPGGFQR) the composition is skewed to gly residues. Over residues 361–380 (LAPPGAPANKPAGRPAPARR) the composition is skewed to low complexity. In terms of domain architecture, tr-type G spans 502–678 (VRPPVVTIMG…CLVADLGDLK (177 aa)). A G1 region spans residues 511–518 (GHVDHGKT). 511-518 (GHVDHGKT) lines the GTP pocket. The segment at 536 to 540 (GITQH) is G2. The segment at 564-567 (DTPG) is G3. GTP is bound by residues 564–568 (DTPGH) and 618–621 (NKID). The interval 618–621 (NKID) is G4. Residues 654–656 (SAK) form a G5 region.

Belongs to the TRAFAC class translation factor GTPase superfamily. Classic translation factor GTPase family. IF-2 subfamily.

It localises to the cytoplasm. Functionally, one of the essential components for the initiation of protein synthesis. Protects formylmethionyl-tRNA from spontaneous hydrolysis and promotes its binding to the 30S ribosomal subunits. Also involved in the hydrolysis of GTP during the formation of the 70S ribosomal complex. This chain is Translation initiation factor IF-2, found in Koribacter versatilis (strain Ellin345).